The chain runs to 375 residues: Probable aminomethyltransferase (375 aa).

The protein belongs to the GcvT family. In terms of assembly, the glycine cleavage system is composed of four proteins: P, T, L and H.

The enzyme catalyses N(6)-[(R)-S(8)-aminomethyldihydrolipoyl]-L-lysyl-[protein] + (6S)-5,6,7,8-tetrahydrofolate = N(6)-[(R)-dihydrolipoyl]-L-lysyl-[protein] + (6R)-5,10-methylene-5,6,7,8-tetrahydrofolate + NH4(+). Its function is as follows. The glycine cleavage system catalyzes the degradation of glycine. In Aeropyrum pernix (strain ATCC 700893 / DSM 11879 / JCM 9820 / NBRC 100138 / K1), this protein is Probable aminomethyltransferase.